The primary structure comprises 345 residues: Phosphoribosylformylglycinamidine cyclo-ligase (345 aa).

Belongs to the AIR synthase family.

It is found in the cytoplasm. The enzyme catalyses 2-formamido-N(1)-(5-O-phospho-beta-D-ribosyl)acetamidine + ATP = 5-amino-1-(5-phospho-beta-D-ribosyl)imidazole + ADP + phosphate + H(+). Its pathway is purine metabolism; IMP biosynthesis via de novo pathway; 5-amino-1-(5-phospho-D-ribosyl)imidazole from N(2)-formyl-N(1)-(5-phospho-D-ribosyl)glycinamide: step 2/2. This chain is Phosphoribosylformylglycinamidine cyclo-ligase, found in Histophilus somni (strain 2336) (Haemophilus somnus).